The chain runs to 260 residues: ATP-dependent zinc metalloprotease FTSH, chloroplastic (260 aa).

Residue His219 participates in Zn(2+) binding. Glu220 is a catalytic residue. Residue His223 coordinates Zn(2+).

It in the N-terminal section; belongs to the AAA ATPase family. The protein in the C-terminal section; belongs to the peptidase M41 family. It depends on Zn(2+) as a cofactor.

It localises to the plastid. The protein localises to the chloroplast thylakoid membrane. Functionally, probable ATP-dependent zinc metallopeptidase. The chain is ATP-dependent zinc metalloprotease FTSH, chloroplastic from Helianthus annuus (Common sunflower).